The primary structure comprises 360 residues: Nicotinate-nucleotide--dimethylbenzimidazole phosphoribosyltransferase (360 aa).

The active-site Proton acceptor is glutamate 327.

The protein belongs to the CobT family.

It carries out the reaction 5,6-dimethylbenzimidazole + nicotinate beta-D-ribonucleotide = alpha-ribazole 5'-phosphate + nicotinate + H(+). Its pathway is nucleoside biosynthesis; alpha-ribazole biosynthesis; alpha-ribazole from 5,6-dimethylbenzimidazole: step 1/2. Functionally, catalyzes the synthesis of alpha-ribazole-5'-phosphate from nicotinate mononucleotide (NAMN) and 5,6-dimethylbenzimidazole (DMB). The sequence is that of Nicotinate-nucleotide--dimethylbenzimidazole phosphoribosyltransferase from Shewanella baltica (strain OS223).